Reading from the N-terminus, the 382-residue chain is Polyadenylate-binding protein 5 (382 aa).

RRM domains are found at residues 18–96 (AALY…WSQP), 106–182 (GNIF…RFKF), 199–276 (TNVF…RAQK), and 302–378 (VPIY…LGQA).

It is found in the cytoplasm. Functionally, binds the poly(A) tail of mRNA. May be involved in cytoplasmic regulatory processes of mRNA metabolism. Can probably bind to cytoplasmic RNA sequences other than poly(A) in vivo. The protein is Polyadenylate-binding protein 5 (PABPC5) of Gorilla gorilla gorilla (Western lowland gorilla).